The following is a 314-amino-acid chain: Zinc transporter ZIP3 (314 aa).

The Extracellular segment spans residues 1–3 (MVK). Residues 4–24 (LLVAKILCMVGVFFFMLLGSL) form a helical membrane-spanning segment. The Cytoplasmic segment spans residues 25–42 (LPVKIIETDFEKAHRSKK). Residues 43-63 (ILSLCNTFGGGVFLATCFNAL) form a helical membrane-spanning segment. The Extracellular portion of the chain corresponds to 64–85 (LPAVREKLQKVLSLGHISTDYP). A helical transmembrane segment spans residues 86–106 (LAETILLLGFFMTVFLEQLIL). Residues 107–169 (TFRKEKPSFI…QGLSRASPVR (63 aa)) are Cytoplasmic-facing. A phosphoserine mark is found at serine 125 and serine 129. The helical transmembrane segment at 170–190 (LLSLAFALSAHSVFEGLALGL) threads the bilayer. Over 191-196 (QEEGEK) the chain is Extracellular. The helical transmembrane segment at 197 to 217 (VVSLFVGVAVHETLVAVALGI) threads the bilayer. The Cytoplasmic portion of the chain corresponds to 218–229 (SMARSAMPLRDA). The helical transmembrane segment at 230–250 (AKLAVTVSAMIPLGIGLGLGI) threads the bilayer. At 251-262 (ESAQGVPGSVAS) the chain is on the extracellular side. Residues 263–283 (VLLQGLAGGTFLFITFLEILA) form a helical membrane-spanning segment. Residues 284-292 (KELEEKSDR) lie on the Cytoplasmic side of the membrane. The chain crosses the membrane as a helical span at residues 293–313 (LLKVLFLVLGYTVLAGMVFLK). Position 314 (tryptophan 314) is a topological domain, extracellular.

The protein belongs to the ZIP transporter (TC 2.A.5) family.

The protein localises to the cell membrane. It is found in the apical cell membrane. It catalyses the reaction Zn(2+)(in) = Zn(2+)(out). In terms of biological role, transporter for the divalent cation Zn(2+). Mediates the influx of Zn(2+) into cells from extracellular space. Controls Zn(2+) accumulation into dentate gyrus granule cells in the hippocampus. Mediates Zn(2+) reuptake from the secreted milk within the alveolar lumen. The protein is Zinc transporter ZIP3 of Homo sapiens (Human).